The primary structure comprises 198 residues: Ribonuclease HII (198 aa).

The region spanning 10-198 (HLVAGVDEVG…PVKRALGLAS (189 aa)) is the RNase H type-2 domain. A divalent metal cation is bound by residues aspartate 16, glutamate 17, and aspartate 108.

Belongs to the RNase HII family. The cofactor is Mn(2+). Requires Mg(2+) as cofactor.

It is found in the cytoplasm. The enzyme catalyses Endonucleolytic cleavage to 5'-phosphomonoester.. Endonuclease that specifically degrades the RNA of RNA-DNA hybrids. The protein is Ribonuclease HII of Escherichia coli (strain ATCC 8739 / DSM 1576 / NBRC 3972 / NCIMB 8545 / WDCM 00012 / Crooks).